The primary structure comprises 560 residues: Calnexin homolog (560 aa).

A signal peptide spans 1–22; that stretch reads MKYGKVSFLALLCSLYVRGSLA. Over 23-489 the chain is Lumenal; the sequence is DPESEQEPLV…ETIIETPEIG (467 aa). Cys-132 and Cys-163 are joined by a disulfide. Tyr-136, Lys-138, Tyr-154, and Asp-161 together coordinate an alpha-D-glucoside. The segment at 242-375 is p domain (Extended arm); the sequence is IYDPEDIKPA…RKIPNPDYFD (134 aa). 5 repeat units span residues 244-255, 261-272, 280-291, 299-310, and 314-324. 4 X approximate repeats stretches follow at residues 244 to 310 and 314 to 371; these read DPED…DWDD and GDWI…IPNP. The segment at 253–273 is disordered; that stretch reads WVDEPEIPDPNAVKPDDWDED. An intrachain disulfide couples Cys-326 to Cys-332. 3 consecutive repeat copies span residues 333-343, 347-357, and 361-371. Residue Glu-391 participates in an alpha-D-glucoside binding. Asn-418 is a glycosylation site (N-linked (GlcNAc...) asparagine). The helical transmembrane segment at 490 to 512 threads the bilayer; the sequence is IAIVAVLGSLTAVILTCYFYFFA. Over 513-560 the chain is Cytoplasmic; sequence SSSPASLSTGTTEAEKEQQEKFKQETETEKIDVSYAPETESPTAKNED. The disordered stretch occupies residues 517–560; it reads ASLSTGTTEAEKEQQEKFKQETETEKIDVSYAPETESPTAKNED. Residues 525 to 544 are compositionally biased toward basic and acidic residues; the sequence is EAEKEQQEKFKQETETEKID. Residue Thr-551 is modified to Phosphothreonine. Position 553 is a phosphoserine (Ser-553). A Phosphothreonine modification is found at Thr-555.

Belongs to the calreticulin family.

The protein resides in the endoplasmic reticulum membrane. Its function is as follows. Calcium-binding protein that interacts with newly synthesized monoglucosylated glycoproteins in the endoplasmic reticulum. It may act in assisting protein assembly and/or in the retention within the ER of unassembled protein subunits. It seems to play a major role in the quality control apparatus of the ER by the retention of incorrectly folded proteins. This Schizosaccharomyces pombe (strain 972 / ATCC 24843) (Fission yeast) protein is Calnexin homolog (cal1).